The following is a 276-amino-acid chain: Undecaprenyl-diphosphatase (276 aa).

The next 7 membrane-spanning stretches (helical) occupy residues 1-21 (MSWL…FLPV), 39-59 (AGAS…LVYF), 84-104 (YWLG…GLLF), 115-135 (LWLV…AEYY), 188-208 (FGFL…LPDA), 222-242 (QLFV…AWFL), and 253-273 (FVGY…AGVV).

This sequence belongs to the UppP family.

The protein localises to the cell membrane. It catalyses the reaction di-trans,octa-cis-undecaprenyl diphosphate + H2O = di-trans,octa-cis-undecaprenyl phosphate + phosphate + H(+). In terms of biological role, catalyzes the dephosphorylation of undecaprenyl diphosphate (UPP). Confers resistance to bacitracin. The protein is Undecaprenyl-diphosphatase of Mycolicibacterium vanbaalenii (strain DSM 7251 / JCM 13017 / BCRC 16820 / KCTC 9966 / NRRL B-24157 / PYR-1) (Mycobacterium vanbaalenii).